The following is a 273-amino-acid chain: Shikimate dehydrogenase (NADP(+)) (273 aa).

Shikimate contacts are provided by residues 14 to 16 (SLS) and Thr59. Lys63 functions as the Proton acceptor in the catalytic mechanism. Shikimate contacts are provided by Asn84 and Asp99. Residues 122-126 (GAGGA) and Met212 contribute to the NADP(+) site. Tyr214 contributes to the shikimate binding site. Position 235 (Gly235) interacts with NADP(+).

It belongs to the shikimate dehydrogenase family. As to quaternary structure, homodimer.

It carries out the reaction shikimate + NADP(+) = 3-dehydroshikimate + NADPH + H(+). Its pathway is metabolic intermediate biosynthesis; chorismate biosynthesis; chorismate from D-erythrose 4-phosphate and phosphoenolpyruvate: step 4/7. Functionally, involved in the biosynthesis of the chorismate, which leads to the biosynthesis of aromatic amino acids. Catalyzes the reversible NADPH linked reduction of 3-dehydroshikimate (DHSA) to yield shikimate (SA). This is Shikimate dehydrogenase (NADP(+)) from Aeropyrum pernix (strain ATCC 700893 / DSM 11879 / JCM 9820 / NBRC 100138 / K1).